The sequence spans 1228 residues: Reverse gyrase (1228 aa).

The RG N-terminal-type zinc-finger motif lies at 1 to 41; that stretch reads MEVPLVAYLHSCPNCGGPITSDRLASGLPCRECLPDGAKAG. Zn(2+) contacts are provided by Cys12, Cys15, Cys30, and Cys33. ATP-binding positions include Gln88 and 105–112; that span reads APTGSGKT. The Helicase ATP-binding domain occupies 92-255; that stretch reads ARRFVRGKSF…NLTKQLRKAE (164 aa). A DEAD box motif is present at residues 211 to 214; it reads DDVD. The segment at 631 to 1228 is topoisomerase I; sequence DLMRTILMVV…RKEVLPHLAS (598 aa). The region spanning 635–809 is the Toprim domain; the sequence is TILMVVESPT…DIRRVEFHEV (175 aa). Mg(2+) is bound by residues Glu641 and Asp778. A Topo IA-type catalytic domain is found at 825–1223; it reads NFSLVKAQIV…LYDEFRKEVL (399 aa). Tyr967 serves as the catalytic O-(5'-phospho-DNA)-tyrosine intermediate.

This sequence in the N-terminal section; belongs to the DEAD box helicase family. DDVD subfamily. In the C-terminal section; belongs to the type IA topoisomerase family. Monomer. It depends on Zn(2+) as a cofactor. Requires Mg(2+) as cofactor.

The protein resides in the cytoplasm. It catalyses the reaction ATP + H2O = ADP + phosphate + H(+). Its function is as follows. Modifies the topological state of DNA by introducing positive supercoils in an ATP-dependent process, increasing the linking number in steps of +1. Binds to single-stranded DNA, transiently cleaves and then rejoins the ends, introducing a positive supercoil in the process. The scissile phosphodiester is attacked by the catalytic tyrosine of the enzyme, resulting in the formation of a DNA-(5'-phosphotyrosyl)-enzyme intermediate. Probably involved in rewinding DNA strands in regions of the chromosome that have opened up to allow replication, transcription, DNA repair and/or for DNA protection. This chain is Reverse gyrase, found in Pyrobaculum aerophilum (strain ATCC 51768 / DSM 7523 / JCM 9630 / CIP 104966 / NBRC 100827 / IM2).